Here is a 186-residue protein sequence, read N- to C-terminus: uncharacterized protein (186 aa).

The Macro domain maps to 1–181 (MVSFSYKGNL…TFVSLASDFL (181 aa)).

Belongs to the MacroD-type family.

This is an uncharacterized protein from Thermoplasma volcanium (strain ATCC 51530 / DSM 4299 / JCM 9571 / NBRC 15438 / GSS1).